Consider the following 1720-residue polypeptide: 182 kDa tankyrase-1-binding protein (1720 aa).

A disordered region spans residues 1-137; the sequence is MKGSTLREGT…PPLTPPARCA (137 aa). The residue at position 14 (serine 14) is a Phosphoserine. Positions 117–127 are enriched in basic and acidic residues; it reads SGKEDAGKEDL. Residue threonine 131 is modified to Phosphothreonine. 2 positions are modified to phosphoserine: serine 178 and serine 220. Disordered regions lie at residues 185–472 and 485–595; these read SRLT…ESNW and RPSG…EDQE. An acidic region spans residues 209-1563; the sequence is EEDSKSPAKG…TEILDSAMYR (1355 aa). Residues 232–243 are compositionally biased toward basic and acidic residues; sequence QEEHSKTPEERN. The residue at position 238 (threonine 238) is a Phosphothreonine. The span at 266 to 287 shows a compositional bias: polar residues; sequence VSKTWVTSSADPVSEHGGSTSA. Residues serine 286 and serine 300 each carry the phosphoserine modification. Over residues 296-316 the composition is skewed to low complexity; that stretch reads PASESPRLSSRPSSPCHSQLS. A compositionally biased stretch (polar residues) spans 317-327; sequence ETQSPAASEAS. Residues serine 429 and serine 437 each carry the phosphoserine modification. The segment covering 449–459 has biased composition (polar residues); it reads TLPQGQGSQSA. A phosphoserine mark is found at serine 496 and serine 500. Over residues 502–518 the composition is skewed to low complexity; that stretch reads ITEASEAAEAAEADSWA. Phosphothreonine is present on residues threonine 503 and threonine 533. 6 positions are modified to phosphoserine: serine 539, serine 568, serine 602, serine 673, serine 692, and serine 713. Disordered stretches follow at residues 659–720, 734–924, and 955–1081; these read TTLP…CSEG, GVAT…EFEK, and SGGG…GWAG. Residues 742–758 show a composition bias toward low complexity; the sequence is SSFGSSSWSQDTSQNYS. Phosphoserine is present on residues serine 763, serine 796, serine 807, serine 845, serine 866, serine 871, serine 876, serine 887, serine 912, serine 976, serine 980, serine 1006, serine 1017, and serine 1022. The segment covering 840–866 has biased composition (basic and acidic residues); the sequence is FGKRESQDPHSIHDKELQDQEFGKRDS. A compositionally biased stretch (basic and acidic residues) spans 991–1014; the sequence is FEKKTPVGEDRFCEASRDVGHLEE. Positions 1027–1039 are enriched in basic and acidic residues; it reads HSRDGAARPKDEG. Phosphoserine is present on residues serine 1047, serine 1063, serine 1084, serine 1096, serine 1126, serine 1131, serine 1171, serine 1212, serine 1241, and serine 1246. The segment at 1128 to 1153 is disordered; the sequence is AGLSPSRKSGGGHFVPPGETKAGAVD. Residues 1198-1255 form a disordered region; it reads LARRLGTGESEEPRSLGVGEKDWTSSVEARNRDLPGQAEVGRHSQARESGVGEPDWSG. The span at 1208–1230 shows a compositional bias: basic and acidic residues; sequence EEPRSLGVGEKDWTSSVEARNRD. Threonine 1275 is modified (phosphothreonine). Serine 1290, serine 1321, serine 1324, serine 1373, and serine 1375 each carry phosphoserine. The interval 1358-1546 is disordered; sequence GRVGPDLELD…RGLLPSCPSE (189 aa). Residues 1402–1411 show a composition bias toward polar residues; sequence EDSSSPSFET. Phosphoserine is present on residues serine 1425, serine 1429, serine 1437, serine 1440, serine 1442, serine 1463, and serine 1466. Residues 1428–1457 are compositionally biased toward polar residues; the sequence is ASPSSCLTRSPPSGSQSLLEGIMTASSSKG. Residues 1440 to 1532 form a tankyrase-binding region; it reads SGSQSLLEGI…QNEQASAPPP (93 aa). Positions 1477–1489 are enriched in low complexity; it reads LAAGAGQGEPQEP. Serine 1496 bears the Phosphoserine mark. Residues 1515 to 1527 show a composition bias toward polar residues; sequence WSLTGAARQNEQA. Serine 1549 bears the Phosphoserine mark. The residue at position 1554 (threonine 1554) is a Phosphothreonine. A disordered region spans residues 1567 to 1720; sequence NLGRKRGHRA…QALKLKKKKI (154 aa). Positions 1568 to 1577 are enriched in basic residues; it reads LGRKRGHRAP. A compositionally biased stretch (basic and acidic residues) spans 1593–1606; the sequence is SDTRLFQDSTEPRA. Serine 1611, serine 1612, and serine 1622 each carry phosphoserine. Residues 1620 to 1626 carry the Nuclear localization signal motif; the sequence is PQSRRTR. Lysine 1635 carries the N6-methyllysine modification. Residues serine 1643 and serine 1657 each carry the phosphoserine modification. Basic and acidic residues predominate over residues 1656-1670; that stretch reads RSAEEGEVTESKSSQ. Positions 1671-1690 are enriched in low complexity; the sequence is KESSVQRSKSCKVPGLGKPL. Position 1706 is a phosphoserine (serine 1706). A Nuclear localization signal motif is present at residues 1714–1719; sequence KLKKKK.

Binds to the ANK repeat domain of TNKS1 and TNKS2. In terms of processing, ADP-ribosylated by TNKS1.

It is found in the nucleus. The protein localises to the cytoplasm. Its subcellular location is the cytoskeleton. It localises to the chromosome. The polypeptide is 182 kDa tankyrase-1-binding protein (Tnks1bp1) (Mus musculus (Mouse)).